Consider the following 251-residue polypeptide: Triosephosphate isomerase (251 aa).

9–11 (NWK) lines the substrate pocket. The Electrophile role is filled by His-95. Glu-167 serves as the catalytic Proton acceptor. Substrate contacts are provided by residues Gly-173, Ser-212, and 233 to 234 (GG).

This sequence belongs to the triosephosphate isomerase family. As to quaternary structure, homodimer.

The protein localises to the cytoplasm. The catalysed reaction is D-glyceraldehyde 3-phosphate = dihydroxyacetone phosphate. Its pathway is carbohydrate biosynthesis; gluconeogenesis. The protein operates within carbohydrate degradation; glycolysis; D-glyceraldehyde 3-phosphate from glycerone phosphate: step 1/1. Its function is as follows. Involved in the gluconeogenesis. Catalyzes stereospecifically the conversion of dihydroxyacetone phosphate (DHAP) to D-glyceraldehyde-3-phosphate (G3P). This chain is Triosephosphate isomerase, found in Pseudomonas putida (strain GB-1).